The chain runs to 208 residues: Large ribosomal subunit protein uL3 (208 aa).

N5-methylglutamine is present on Q149.

Belongs to the universal ribosomal protein uL3 family. In terms of assembly, part of the 50S ribosomal subunit. Forms a cluster with proteins L14 and L19. Methylated by PrmB.

One of the primary rRNA binding proteins, it binds directly near the 3'-end of the 23S rRNA, where it nucleates assembly of the 50S subunit. The protein is Large ribosomal subunit protein uL3 of Glaesserella parasuis serovar 5 (strain SH0165) (Haemophilus parasuis).